Reading from the N-terminus, the 424-residue chain is MALPTPSDSTLPAEARGRGRRRRLVWTPSQSEALRACFERNPYPGIATRERLAQAIGIPEPRVQIWFQNERSRQLRQHRRESRPWPGRRGPPEGRRKRTAVTGSQTALLLRAFEKDRFPGIAAREELARETGLPESRIQIWFQNRRARHPGQGGRAPAQAGGLCSAAPGGGHPAPSWVAFAHTGAWGTGLPAPHVPCAPGALPQGAFVSQAARAAPALQPSQAAPAEGISQPAPARGDFAYAAPAPPDGALSHPQAPRWPPHPGKSREDRDPQRDGLPGPCAVAQPGPAQAGPQGQGVLAPPTSQGSPWWGWGRGPQVAGAAWEPQAGAAPPPQPAPPDASASARQGQMQGIPAPSQALQEPAPWSALPCGLLLDELLASPEFLQQAQPLLETEAPGELEASEEAASLEAPLSEEEYRALLEEL.

The segment covering Met-1 to Thr-10 has biased composition (polar residues). Disordered regions lie at residues Met-1–Leu-24, Ser-72–Thr-102, Leu-218–Pro-362, and Gln-388–Glu-414. 2 DNA-binding regions (homeobox) span residues Gly-19–His-78 and Gly-94–Gly-153. Residues Lys-265–Arg-274 are compositionally biased toward basic and acidic residues. Composition is skewed to low complexity over residues Pro-278–Pro-302 and Ala-319–Ala-329. Residues Ala-327–Leu-424 are required for interaction with EP300 and CREBBP, and for transcriptional activation of target genes. Positions Ala-405–Leu-424 are important for transcriptional activation of target genes.

Belongs to the paired homeobox family. Binds DNA as a monomer. Interacts (via C-terminus) with EP300 and CREBBP. Isoform 1: Does not seem to be expressed in normal muscle, but is detected in muscle of individuals with FSHD, and also in testis (at protein level). Isoform 1: Does not seem to be expressed in normal muscle, but in muscle of individuals with FSHD, where it may be toxic to cells. Isoform 2: Detected in skeletal muscle, fibroblasts and testis from healthy individuals.

The protein resides in the nucleus. Its subcellular location is the cytoplasm. Its function is as follows. Transcription factor that is selectively and transiently expressed in cleavage-stage embryos. Binds to double-stranded DNA elements with the consensus sequence 5'-TAATCTAATCA-3'. Binds to chromatin containing histone H3 acetylated at 'Lys-27' (H3K27ac) and promotes deacetylation of H3K27ac. In parallel, binds to chromatin that lacks histone H3 acetylation at 'Lys-27' (H3K27ac) and recruits EP300 and CREBBP to promote acetylation of histone H3 at 'Lys-27' at new sites. Involved in transcriptional regulation of numerous genes, primarily as transcriptional activator, but also mediates repression of a set of target genes. Promotes expression of ZSCAN4 and KDM4E, two proteins with essential roles during early embryogenesis. Promotes nuclear translocation of CTNNB1/beta-catenin and its subsequent activation of target genes. Heterologous expression in cultured embryonic stem cells mediates transcription of HERVL retrotransposons and transcripts derived from ACRO1 and HSATII satellite repeats. May activate expression of PITX1. May regulate microRNA (miRNA) expression. Inappropriate expression can inhibit myogenesis and promote apoptosis. Probably inactive as a transcriptional activator, due to the absence of the C-terminal region that is important for transcriptional activation. Can inhibit transcriptional activation mediated by isoform 1. Heterologous expression of isoform 2 has no deleterious effect on cell survival. The polypeptide is Double homeobox protein 4 (Homo sapiens (Human)).